Consider the following 584-residue polypeptide: Protein BONZAI 3 (584 aa).

Residues 1–23 (MGGCLSGDVKGGKQAIGGVQQRP) form a disordered region. Glycine 2 carries N-myristoyl glycine lipidation. C2 domains follow at residues 34 to 167 (HNDA…TLTL) and 178 to 305 (NRNL…NFVY). Aspartate 67, aspartate 73, aspartate 126, aspartate 128, and aspartate 145 together coordinate Ca(2+). In terms of domain architecture, VWFA spans 344–563 (NFMVAVDFTA…SVVQALLEEL (220 aa)).

This sequence belongs to the copine family. In terms of assembly, interacts with BAP1 and BAP2. The cofactor is Ca(2+). Expressed at an extremely low level.

It is found in the cell membrane. Functionally, negative regulator of cell death and defense responses. Repress a number of R genes and may have effects in promoting growth and development. May function in membrane trafficking and in fusion of vesicles with plasma membrane. In Arabidopsis thaliana (Mouse-ear cress), this protein is Protein BONZAI 3 (BON3).